We begin with the raw amino-acid sequence, 142 residues long: Midkine (142 aa).

The signal sequence occupies residues 1-21; it reads MQPRGLLLLLALLLLAAAAEA. 5 cysteine pairs are disulfide-bonded: Cys-36-Cys-60, Cys-44-Cys-69, Cys-51-Cys-73, Cys-83-Cys-115, and Cys-93-Cys-125.

This sequence belongs to the pleiotrophin family.

It is found in the cell surface. It localises to the secreted. The protein localises to the extracellular space. Its subcellular location is the extracellular matrix. The protein resides in the basement membrane. In terms of biological role, has mitogenic activity, and neurite extension activity for PC12 cells. The sequence is that of Midkine (RIHB) from Gallus gallus (Chicken).